The sequence spans 319 residues: Olfactory receptor 13F1 (319 aa).

The Extracellular segment spans residues 1–25 (MFPANWTSVKVFFFLGFFHYPKVQV). Residue Asn5 is glycosylated (N-linked (GlcNAc...) asparagine). Residues 26–46 (IIFAVCLLMYLITLLGNIFLI) traverse the membrane as a helical segment. At 47–54 (SITILDSH) the chain is on the cytoplasmic side. The helical transmembrane segment at 55-75 (LHTPMYLFLSNLSFLDIWYSS) threads the bilayer. Residues 76 to 99 (SALSPMLANFVSGRNTISFSGCAT) are Extracellular-facing. An intrachain disulfide couples Cys97 to Cys189. Residues 100–120 (QMYLSLAMGSTECVLLPMMAY) traverse the membrane as a helical segment. Topologically, residues 121–139 (DRYVAICNPLRYPVIMNRR) are cytoplasmic. Residues 140-160 (TCVQIAAGSWMTGCLTAMVEM) traverse the membrane as a helical segment. At 161–197 (MSVLPLSLCGNSIINHFTCEILAILKLVCVDTSLVQL) the chain is on the extracellular side. The helical transmembrane segment at 198-217 (IMLVISVLLLPMPMLLICIS) threads the bilayer. Topologically, residues 218 to 237 (YAFILASILRISSVEGRSKA) are cytoplasmic. The helical transmembrane segment at 238 to 258 (FSTCTAHLMVVVLFYGTALSM) threads the bilayer. Residues 259-271 (HLKPSAVDSQEID) are Extracellular-facing. Residues 272–292 (KFMALVYAGQTPMLNPIIYSL) form a helical membrane-spanning segment. At 293–319 (RNKEVKVALKKLLIRNHFNTAFISILK) the chain is on the cytoplasmic side.

Belongs to the G-protein coupled receptor 1 family.

The protein localises to the cell membrane. Its function is as follows. Odorant receptor. The sequence is that of Olfactory receptor 13F1 (OR13F1) from Homo sapiens (Human).